Consider the following 410-residue polypeptide: Scarecrow-like protein 32 (410 aa).

Positions 18–408 (LRGCGDANFM…HSVVFATVWV (391 aa)) constitute a GRAS domain. A leucine repeat I (LRI) region spans residues 25-88 (NFMEQLLLHC…AVSKTPTLSS (64 aa)). The tract at residues 107–188 (LAAFVDLTPW…HFPPFINISY (82 aa)) is VHIID. A VHIID motif is present at residues 138 to 142 (VHIVD). Residues 190–227 (ELGSKLVNFATTRNITMEFTIVPSTYSDGFSSLLQQLR) are leucine repeat II (LRII). The tract at residues 237–329 (LVVNCHMMLR…EAEISWKIEN (93 aa)) is PFYRE. The segment at 332-408 (AKEGAERVER…HSVVFATVWV (77 aa)) is SAW.

This sequence belongs to the GRAS family. As to expression, expressed in seedlings, leaves and flowers.

It localises to the nucleus. Probable transcription factor involved in plant development. The chain is Scarecrow-like protein 32 (SCL32) from Arabidopsis thaliana (Mouse-ear cress).